Here is a 296-residue protein sequence, read N- to C-terminus: Probable endonuclease 4 (296 aa).

9 residues coordinate Zn(2+): His68, His109, Glu144, Asp178, His181, His213, Asp226, His228, and Glu258.

This sequence belongs to the AP endonuclease 2 family. The cofactor is Zn(2+).

It catalyses the reaction Endonucleolytic cleavage to 5'-phosphooligonucleotide end-products.. Its function is as follows. Endonuclease IV plays a role in DNA repair. It cleaves phosphodiester bonds at apurinic or apyrimidinic (AP) sites, generating a 3'-hydroxyl group and a 5'-terminal sugar phosphate. This Staphylococcus saprophyticus subsp. saprophyticus (strain ATCC 15305 / DSM 20229 / NCIMB 8711 / NCTC 7292 / S-41) protein is Probable endonuclease 4.